The primary structure comprises 111 residues: uncharacterized protein (111 aa).

This sequence belongs to the asfivirus E111R family.

This is an uncharacterized protein from African swine fever virus (strain Badajoz 1971 Vero-adapted) (Ba71V).